The chain runs to 147 residues: Large ribosomal subunit protein uL15 (147 aa).

Positions 1–55 (MKLDNLAPQPGAKKRKRRVGRGIAAGQGASCGFGMRGQKSRSGRPTRPGFEGGQM) are disordered. The span at 23–35 (IAAGQGASCGFGM) shows a compositional bias: gly residues.

Belongs to the universal ribosomal protein uL15 family. In terms of assembly, part of the 50S ribosomal subunit.

Its function is as follows. Binds to the 23S rRNA. The polypeptide is Large ribosomal subunit protein uL15 (Synechococcus elongatus (strain ATCC 33912 / PCC 7942 / FACHB-805) (Anacystis nidulans R2)).